Reading from the N-terminus, the 435-residue chain is Enolase (435 aa).

Residue Gln-167 coordinates (2R)-2-phosphoglycerate. Glu-209 functions as the Proton donor in the catalytic mechanism. 3 residues coordinate Mg(2+): Asp-246, Glu-291, and Asp-318. Residues Lys-343, Arg-372, Ser-373, and Lys-394 each coordinate (2R)-2-phosphoglycerate. Lys-343 serves as the catalytic Proton acceptor.

This sequence belongs to the enolase family. As to quaternary structure, component of the RNA degradosome, a multiprotein complex involved in RNA processing and mRNA degradation. It depends on Mg(2+) as a cofactor.

It is found in the cytoplasm. Its subcellular location is the secreted. The protein resides in the cell surface. The catalysed reaction is (2R)-2-phosphoglycerate = phosphoenolpyruvate + H2O. It participates in carbohydrate degradation; glycolysis; pyruvate from D-glyceraldehyde 3-phosphate: step 4/5. In terms of biological role, catalyzes the reversible conversion of 2-phosphoglycerate (2-PG) into phosphoenolpyruvate (PEP). It is essential for the degradation of carbohydrates via glycolysis. The chain is Enolase from Psychromonas ingrahamii (strain DSM 17664 / CCUG 51855 / 37).